We begin with the raw amino-acid sequence, 315 residues long: DNA-directed RNA polymerase subunit alpha (315 aa).

The segment at 1 to 228 (MLEIEKPKIE…EHLRLFIGLT (228 aa)) is alpha N-terminal domain (alpha-NTD). Residues 245-315 (KDKILEMTIE…LGLGFRKADD (71 aa)) form an alpha C-terminal domain (alpha-CTD) region.

This sequence belongs to the RNA polymerase alpha chain family. As to quaternary structure, homodimer. The RNAP catalytic core consists of 2 alpha, 1 beta, 1 beta' and 1 omega subunit. When a sigma factor is associated with the core the holoenzyme is formed, which can initiate transcription.

The enzyme catalyses RNA(n) + a ribonucleoside 5'-triphosphate = RNA(n+1) + diphosphate. Its function is as follows. DNA-dependent RNA polymerase catalyzes the transcription of DNA into RNA using the four ribonucleoside triphosphates as substrates. The sequence is that of DNA-directed RNA polymerase subunit alpha from Desulfitobacterium hafniense (strain DSM 10664 / DCB-2).